A 169-amino-acid chain; its full sequence is Ureidoglycolate lyase (169 aa).

This sequence belongs to the ureidoglycolate lyase family. As to quaternary structure, homodimer. Ni(2+) is required as a cofactor.

The enzyme catalyses (S)-ureidoglycolate = urea + glyoxylate. The protein operates within nitrogen metabolism; (S)-allantoin degradation. Its function is as follows. Catalyzes the catabolism of the allantoin degradation intermediate (S)-ureidoglycolate, generating urea and glyoxylate. Involved in the utilization of allantoin as nitrogen source. In Pseudomonas aeruginosa (strain LESB58), this protein is Ureidoglycolate lyase.